The sequence spans 531 residues: Na(+)/H(+) antiporter NhaB (531 aa).

A run of 12 helical transmembrane segments spans residues Phe13–Pro33, Leu34–Phe54, Leu90–Met110, Ile121–Phe141, Phe145–Ile165, Leu206–Pro226, Phe242–Val262, Val308–Gly328, Glu352–Ile372, Leu394–Gly414, Gly456–Tyr476, and Met482–Leu502.

This sequence belongs to the NhaB Na(+)/H(+) (TC 2.A.34) antiporter family.

Its subcellular location is the cell inner membrane. The catalysed reaction is 2 Na(+)(in) + 3 H(+)(out) = 2 Na(+)(out) + 3 H(+)(in). Functionally, na(+)/H(+) antiporter that extrudes sodium in exchange for external protons. In Aliivibrio salmonicida (strain LFI1238) (Vibrio salmonicida (strain LFI1238)), this protein is Na(+)/H(+) antiporter NhaB.